The following is a 108-amino-acid chain: T cell receptor alpha variable 1-1 (108 aa).

The signal sequence occupies residues 1–18; that stretch reads MWGAFLLYVSMKMGGTAG. One can recognise an Ig-like domain in the interval 19–108; that stretch reads QSLEQPSEVT…DSASYFCAVR (90 aa). An N-linked (GlcNAc...) asparagine glycan is attached at Asn38. Cysteines 39 and 105 form a disulfide.

In terms of assembly, alpha-beta TR is a heterodimer composed of an alpha and beta chain; disulfide-linked. The alpha-beta TR is associated with the transmembrane signaling CD3 coreceptor proteins to form the TR-CD3 (TcR or TCR). The assembly of alpha-beta TR heterodimers with CD3 occurs in the endoplasmic reticulum where a single alpha-beta TR heterodimer associates with one CD3D-CD3E heterodimer, one CD3G-CD3E heterodimer and one CD247 homodimer forming a stable octameric structure. CD3D-CD3E and CD3G-CD3E heterodimers preferentially associate with TR alpha and TR beta chains, respectively. The association of the CD247 homodimer is the last step of TcR assembly in the endoplasmic reticulum and is required for transport to the cell surface.

It is found in the cell membrane. Its function is as follows. V region of the variable domain of T cell receptor (TR) alpha chain that participates in the antigen recognition. Alpha-beta T cell receptors are antigen specific receptors which are essential to the immune response and are present on the cell surface of T lymphocytes. Recognize peptide-major histocompatibility (MH) (pMH) complexes that are displayed by antigen presenting cells (APC), a prerequisite for efficient T cell adaptive immunity against pathogens. Binding of alpha-beta TR to pMH complex initiates TR-CD3 clustering on the cell surface and intracellular activation of LCK that phosphorylates the ITAM motifs of CD3G, CD3D, CD3E and CD247 enabling the recruitment of ZAP70. In turn ZAP70 phosphorylates LAT, which recruits numerous signaling molecules to form the LAT signalosome. The LAT signalosome propagates signal branching to three major signaling pathways, the calcium, the mitogen-activated protein kinase (MAPK) kinase and the nuclear factor NF-kappa-B (NF-kB) pathways, leading to the mobilization of transcription factors that are critical for gene expression and essential for T cell growth and differentiation. The T cell repertoire is generated in the thymus, by V-(D)-J rearrangement. This repertoire is then shaped by intrathymic selection events to generate a peripheral T cell pool of self-MH restricted, non-autoaggressive T cells. Post-thymic interaction of alpha-beta TR with the pMH complexes shapes TR structural and functional avidity. This chain is T cell receptor alpha variable 1-1, found in Homo sapiens (Human).